Reading from the N-terminus, the 505-residue chain is ATP synthase subunit alpha, chloroplastic (505 aa).

An ATP-binding site is contributed by 170-177 (GDRQTGKT).

This sequence belongs to the ATPase alpha/beta chains family. As to quaternary structure, F-type ATPases have 2 components, CF(1) - the catalytic core - and CF(0) - the membrane proton channel. CF(1) has five subunits: alpha(3), beta(3), gamma(1), delta(1), epsilon(1). CF(0) has four main subunits: a, b, b' and c.

It localises to the plastid. Its subcellular location is the chloroplast thylakoid membrane. The enzyme catalyses ATP + H2O + 4 H(+)(in) = ADP + phosphate + 5 H(+)(out). Its function is as follows. Produces ATP from ADP in the presence of a proton gradient across the membrane. The alpha chain is a regulatory subunit. The chain is ATP synthase subunit alpha, chloroplastic from Phaeodactylum tricornutum (strain CCAP 1055/1).